We begin with the raw amino-acid sequence, 119 residues long: Basic phospholipase A2 (119 aa).

7 disulfides stabilise this stretch: cysteine 11–cysteine 72, cysteine 27–cysteine 118, cysteine 29–cysteine 45, cysteine 44–cysteine 100, cysteine 51–cysteine 93, cysteine 61–cysteine 86, and cysteine 79–cysteine 91. Ca(2+) contacts are provided by tyrosine 28, glycine 30, and glycine 32. The active site involves histidine 48. Ca(2+) is bound at residue aspartate 49. An N-linked (GlcNAc...) asparagine glycan is attached at asparagine 82. Residue aspartate 94 is part of the active site.

This sequence belongs to the phospholipase A2 family. Group I subfamily. D49 sub-subfamily. Ca(2+) is required as a cofactor. Expressed by the venom gland.

The protein resides in the secreted. The enzyme catalyses a 1,2-diacyl-sn-glycero-3-phosphocholine + H2O = a 1-acyl-sn-glycero-3-phosphocholine + a fatty acid + H(+). In terms of biological role, snake venom phospholipase A2 (PLA2) that shows weak myotoxicity and induces edema in mice. Shows no cytotoxicity in vitro. Has an anticoagulant effect in vitro. PLA2 catalyzes the calcium-dependent hydrolysis of the 2-acyl groups in 3-sn-phosphoglycerides. This Micrurus mipartitus (Red-tailed coral snake) protein is Basic phospholipase A2.